Consider the following 385-residue polypeptide: Succinyl-diaminopimelate desuccinylase (385 aa).

His73 provides a ligand contact to Zn(2+). The active site involves Asp75. Asp106 contributes to the Zn(2+) binding site. Glu141 (proton acceptor) is an active-site residue. Residues Glu142, Glu170, and His359 each contribute to the Zn(2+) site.

This sequence belongs to the peptidase M20A family. DapE subfamily. As to quaternary structure, homodimer. Zn(2+) is required as a cofactor. It depends on Co(2+) as a cofactor.

It carries out the reaction N-succinyl-(2S,6S)-2,6-diaminopimelate + H2O = (2S,6S)-2,6-diaminopimelate + succinate. Its pathway is amino-acid biosynthesis; L-lysine biosynthesis via DAP pathway; LL-2,6-diaminopimelate from (S)-tetrahydrodipicolinate (succinylase route): step 3/3. Functionally, catalyzes the hydrolysis of N-succinyl-L,L-diaminopimelic acid (SDAP), forming succinate and LL-2,6-diaminopimelate (DAP), an intermediate involved in the bacterial biosynthesis of lysine and meso-diaminopimelic acid, an essential component of bacterial cell walls. The chain is Succinyl-diaminopimelate desuccinylase from Methylorubrum extorquens (strain PA1) (Methylobacterium extorquens).